The primary structure comprises 511 residues: 2-isopropylmalate synthase (511 aa).

The 263-residue stretch at 5-267 (IQIFDTTLRD…QTQINLEETK (263 aa)) folds into the Pyruvate carboxyltransferase domain. Positions 14, 202, 204, and 238 each coordinate Mn(2+). Residues 391 to 511 (KVETLQLQFV…NTKVEEGIHS (121 aa)) form a regulatory domain region.

Belongs to the alpha-IPM synthase/homocitrate synthase family. LeuA type 1 subfamily. As to quaternary structure, homodimer. The cofactor is Mn(2+).

The protein localises to the cytoplasm. The catalysed reaction is 3-methyl-2-oxobutanoate + acetyl-CoA + H2O = (2S)-2-isopropylmalate + CoA + H(+). It participates in amino-acid biosynthesis; L-leucine biosynthesis; L-leucine from 3-methyl-2-oxobutanoate: step 1/4. Catalyzes the condensation of the acetyl group of acetyl-CoA with 3-methyl-2-oxobutanoate (2-ketoisovalerate) to form 3-carboxy-3-hydroxy-4-methylpentanoate (2-isopropylmalate). In Staphylococcus saprophyticus subsp. saprophyticus (strain ATCC 15305 / DSM 20229 / NCIMB 8711 / NCTC 7292 / S-41), this protein is 2-isopropylmalate synthase.